A 109-amino-acid chain; its full sequence is Iron-sulfur cluster assembly protein CyaY (109 aa).

This sequence belongs to the frataxin family.

Its function is as follows. Involved in iron-sulfur (Fe-S) cluster assembly. May act as a regulator of Fe-S biogenesis. The polypeptide is Iron-sulfur cluster assembly protein CyaY (Verminephrobacter eiseniae (strain EF01-2)).